The primary structure comprises 272 residues: NH(3)-dependent NAD(+) synthetase (272 aa).

Residue 45-52 coordinates ATP; it reads GISGGQDS. Asp51 lines the Mg(2+) pocket. Arg138 lines the deamido-NAD(+) pocket. An ATP-binding site is contributed by Thr158. Residue Glu163 participates in Mg(2+) binding. Residues Lys171 and Asp178 each coordinate deamido-NAD(+). 2 residues coordinate ATP: Lys187 and Thr209. 258-259 serves as a coordination point for deamido-NAD(+); sequence HK.

It belongs to the NAD synthetase family. In terms of assembly, homodimer.

It catalyses the reaction deamido-NAD(+) + NH4(+) + ATP = AMP + diphosphate + NAD(+) + H(+). It functions in the pathway cofactor biosynthesis; NAD(+) biosynthesis; NAD(+) from deamido-NAD(+) (ammonia route): step 1/1. In terms of biological role, catalyzes the ATP-dependent amidation of deamido-NAD to form NAD. Uses ammonia as a nitrogen source. The chain is NH(3)-dependent NAD(+) synthetase from Bacillus cereus (strain ATCC 10987 / NRS 248).